Consider the following 291-residue polypeptide: ATP synthase gamma chain (291 aa).

It belongs to the ATPase gamma chain family. F-type ATPases have 2 components, CF(1) - the catalytic core - and CF(0) - the membrane proton channel. CF(1) has five subunits: alpha(3), beta(3), gamma(1), delta(1), epsilon(1). CF(0) has three main subunits: a, b and c.

It is found in the cell inner membrane. Its function is as follows. Produces ATP from ADP in the presence of a proton gradient across the membrane. The gamma chain is believed to be important in regulating ATPase activity and the flow of protons through the CF(0) complex. The polypeptide is ATP synthase gamma chain (Sinorhizobium medicae (strain WSM419) (Ensifer medicae)).